Here is a 473-residue protein sequence, read N- to C-terminus: Photosystem II CP43 reaction center protein (473 aa).

A propeptide spanning residues 1–14 (MKTLYSLRRFYPVE) is cleaved from the precursor. At threonine 15 the chain carries N-acetylthreonine. Threonine 15 carries the phosphothreonine modification. The next 5 helical transmembrane spans lie at 69 to 93 (LFEVAHFVPEKPMYEQGLILLPHLA), 134 to 155 (LLGPETLEESFPFFGYVWKDRN), 178 to 200 (KALYFGGVYDTWAPGGGDVRKIT), 255 to 275 (KPFAWARRALVWSGEAYLSYS), and 291 to 312 (WFNNTAYPSEFYGPTGPEASQA). Glutamate 367 is a binding site for [CaMn4O5] cluster. The chain crosses the membrane as a helical span at residues 447-471 (RARAAAAGFEKGIDRDFEPVLSMTP).

The protein belongs to the PsbB/PsbC family. PsbC subfamily. As to quaternary structure, PSII is composed of 1 copy each of membrane proteins PsbA, PsbB, PsbC, PsbD, PsbE, PsbF, PsbH, PsbI, PsbJ, PsbK, PsbL, PsbM, PsbT, PsbX, PsbY, PsbZ, Psb30/Ycf12, at least 3 peripheral proteins of the oxygen-evolving complex and a large number of cofactors. It forms dimeric complexes. It depends on Binds multiple chlorophylls and provides some of the ligands for the Ca-4Mn-5O cluster of the oxygen-evolving complex. It may also provide a ligand for a Cl- that is required for oxygen evolution. PSII binds additional chlorophylls, carotenoids and specific lipids. as a cofactor.

The protein resides in the plastid. It is found in the chloroplast thylakoid membrane. Its function is as follows. One of the components of the core complex of photosystem II (PSII). It binds chlorophyll and helps catalyze the primary light-induced photochemical processes of PSII. PSII is a light-driven water:plastoquinone oxidoreductase, using light energy to abstract electrons from H(2)O, generating O(2) and a proton gradient subsequently used for ATP formation. In Vitis vinifera (Grape), this protein is Photosystem II CP43 reaction center protein.